Reading from the N-terminus, the 401-residue chain is Phosphoglycerate kinase, cytosolic (401 aa).

11 residues coordinate (2R)-3-phosphoglycerate: Ala-24, Asp-25, Asn-27, Arg-41, Ser-63, His-64, Gly-66, Arg-67, Arg-122, His-154, and Arg-155. Gly-200 serves as a coordination point for ADP. Gly-200 contributes to the CDP binding site. AMP is bound by residues Lys-202 and Lys-206. Lys-206 lines the ATP pocket. Gly-224 serves as a coordination point for ADP. Residue Gly-224 coordinates CDP. AMP contacts are provided by Gly-225 and Gly-297. ATP-binding residues include Gly-225 and Gly-297. 2 residues coordinate CDP: Gly-322 and Phe-327. Residue Phe-327 participates in ADP binding. Glu-328 is an AMP binding site. ATP contacts are provided by Glu-328, Asp-359, and Ser-360. Asp-359 provides a ligand contact to Mg(2+).

The protein belongs to the phosphoglycerate kinase family. In terms of assembly, monomer. Requires Mg(2+) as cofactor.

It localises to the cytoplasm. The enzyme catalyses (2R)-3-phosphoglycerate + ATP = (2R)-3-phospho-glyceroyl phosphate + ADP. It participates in carbohydrate degradation; glycolysis; pyruvate from D-glyceraldehyde 3-phosphate: step 2/5. In Triticum aestivum (Wheat), this protein is Phosphoglycerate kinase, cytosolic.